The chain runs to 285 residues: MKVLLATALVSLLPFSSAVECSKNEILNKYRVNEFSIGGVSVQDTPPSETKESWWLNICDEHDSKSSIPDQCNVKDIFCGVTSVALPGKESIVTKVMDFTSSVALEVKETAEALSIRLSGAAWGSHILNADIYLQCQEKGSGSLTESSWTDDQNVKLVFSGPFGCLKKGNDNKDGNGDDDNNDKDGDDSDKKPHDGDKNGSKPKGGAGLGSWLVWLFMYATIFALIYLVVTSYMNTRNGSFNDFREEFVDRSTTFATNLPQFAKEVAGKIVNSGSSSQRGGYSAV.

Residues Met1 to Ala18 form the signal peptide. Positions Val19 to Lys167 constitute an MRH domain. At Val19 to Leu209 the chain is on the lumenal side. 3 cysteine pairs are disulfide-bonded: Cys21/Cys59, Cys72/Cys79, and Cys136/Cys165. The segment at Lys168 to Lys204 is disordered. Residues Gly177 to Asp188 are compositionally biased toward acidic residues. Basic and acidic residues predominate over residues Ser189–Gly200. The N-linked (GlcNAc...) asparagine glycan is linked to Asn199. A helical transmembrane segment spans residues Gly210–Val230. Over Thr231–Val285 the chain is Cytoplasmic.

Belongs to the ATG27 family.

It localises to the cytoplasmic vesicle membrane. The protein resides in the golgi apparatus membrane. It is found in the mitochondrion membrane. The protein localises to the preautophagosomal structure membrane. Functionally, effector of VPS34 phosphatidylinositol 3-phosphate kinase signaling. Regulates the cytoplasm to vacuole transport (Cvt) vesicle formation. Plays a role in ATG protein retrieval from the pre-autophagosomal structure (PAS) and is especially required for autophagy-dependent cycling of ATG9. This chain is Autophagy-related protein 27 (ATG27), found in Kluyveromyces lactis (strain ATCC 8585 / CBS 2359 / DSM 70799 / NBRC 1267 / NRRL Y-1140 / WM37) (Yeast).